We begin with the raw amino-acid sequence, 109 residues long: Synaptobrevin-1 (109 aa).

Residues M1–Q26 are disordered. The Cytoplasmic segment spans residues M1–K86. Positions R23 to K83 constitute a v-SNARE coiled-coil homology domain. The helical; Anchor for type IV membrane protein transmembrane segment at M87–G107 threads the bilayer. The Extracellular portion of the chain corresponds to G108–K109.

The protein belongs to the synaptobrevin family. Part of the SNARE core complex containing ric-4/SNAP25, snb-1/VAMP2 and unc-64/STX1A. This complex binds to cpx-1/CPLX1. In terms of tissue distribution, expressed in the nervous system notably the nerve ring, ventral cord and dorsal cord.

The protein resides in the cytoplasmic vesicle. It is found in the secretory vesicle. It localises to the synaptic vesicle membrane. The protein localises to the cell membrane. Its subcellular location is the synapse. The protein resides in the synaptosome. In terms of biological role, involved in the targeting and/or fusion of transport vesicles to their target membrane. Acts in neuronal exocytosis of synaptic transmission. Likely to have a role in cholinergic transmisson. Required for viability, coordinated movement and M3 pharynx motor neuron function. The polypeptide is Synaptobrevin-1 (Caenorhabditis elegans).